A 68-amino-acid polypeptide reads, in one-letter code: DNA gyrase inhibitor YacG (68 aa).

Residues C10, C13, C29, and C33 each contribute to the Zn(2+) site. A disordered region spans residues 45–68 (EKRIPSDTELSDSDEWSEEDPLKH). Residues 53-68 (ELSDSDEWSEEDPLKH) show a composition bias toward acidic residues.

Belongs to the DNA gyrase inhibitor YacG family. As to quaternary structure, interacts with GyrB. Zn(2+) is required as a cofactor.

Its function is as follows. Inhibits all the catalytic activities of DNA gyrase by preventing its interaction with DNA. Acts by binding directly to the C-terminal domain of GyrB, which probably disrupts DNA binding by the gyrase. This is DNA gyrase inhibitor YacG from Yersinia pseudotuberculosis serotype O:1b (strain IP 31758).